Consider the following 190-residue polypeptide: Vascular endothelial growth factor A (190 aa).

The N-terminal stretch at 1 to 26 (MNFLLSWVHWTLALLLYLHHAKWSQA) is a signal peptide. 3 disulfide bridges follow: C51-C93, C82-C127, and C86-C129. N-linked (GlcNAc...) asparagine glycosylation occurs at N100.

Belongs to the PDGF/VEGF growth factor family. As to quaternary structure, homodimer; disulfide-linked. Also found as heterodimer with PGF. Interacts with NRP1. Interacts with isoform 2 of BSG. Interacts with CD82; this interaction inhibits VEGFA-mediated signaling pathway.

The protein localises to the secreted. Functionally, growth factor active in angiogenesis, vasculogenesis and endothelial cell growth. Induces endothelial cell proliferation, promotes cell migration, inhibits apoptosis and induces permeabilization of blood vessels. Binds to the FLT1/VEGFR1 and KDR/VEGFR2 receptors, heparan sulfate and heparin. Binding to NRP1 receptor initiates a signaling pathway needed for motor neuron axon guidance and cell body migration, including for the caudal migration of facial motor neurons from rhombomere 4 to rhombomere 6 during embryonic development. Also binds the DEAR/FBXW7-AS1 receptor. This is Vascular endothelial growth factor A (VEGFA) from Mesocricetus auratus (Golden hamster).